Reading from the N-terminus, the 114-residue chain is Ribosome-binding factor A (114 aa).

It belongs to the RbfA family. As to quaternary structure, monomer. Binds 30S ribosomal subunits, but not 50S ribosomal subunits or 70S ribosomes.

It localises to the cytoplasm. Functionally, one of several proteins that assist in the late maturation steps of the functional core of the 30S ribosomal subunit. Associates with free 30S ribosomal subunits (but not with 30S subunits that are part of 70S ribosomes or polysomes). Required for efficient processing of 16S rRNA. May interact with the 5'-terminal helix region of 16S rRNA. This chain is Ribosome-binding factor A, found in Listeria innocua serovar 6a (strain ATCC BAA-680 / CLIP 11262).